The chain runs to 342 residues: S-adenosylmethionine:tRNA ribosyltransferase-isomerase (342 aa).

This sequence belongs to the QueA family. Monomer.

It is found in the cytoplasm. The catalysed reaction is 7-aminomethyl-7-carbaguanosine(34) in tRNA + S-adenosyl-L-methionine = epoxyqueuosine(34) in tRNA + adenine + L-methionine + 2 H(+). It participates in tRNA modification; tRNA-queuosine biosynthesis. Its function is as follows. Transfers and isomerizes the ribose moiety from AdoMet to the 7-aminomethyl group of 7-deazaguanine (preQ1-tRNA) to give epoxyqueuosine (oQ-tRNA). This Listeria monocytogenes serovar 1/2a (strain ATCC BAA-679 / EGD-e) protein is S-adenosylmethionine:tRNA ribosyltransferase-isomerase.